Consider the following 173-residue polypeptide: RNA polymerase sigma factor YlaC (173 aa).

Belongs to the sigma-70 factor family. ECF subfamily.

Functionally, sigma factors are initiation factors that promote the attachment of RNA polymerase to specific initiation sites and are then released. This sigma factor contributes to oxidative stress resistance. This chain is RNA polymerase sigma factor YlaC (ylaC), found in Bacillus subtilis (strain 168).